We begin with the raw amino-acid sequence, 243 residues long: Pyridoxine 5'-phosphate synthase (243 aa).

Asn9 serves as a coordination point for 3-amino-2-oxopropyl phosphate. 11-12 contacts 1-deoxy-D-xylulose 5-phosphate; that stretch reads DH. Position 20 (Arg20) interacts with 3-amino-2-oxopropyl phosphate. Catalysis depends on His45, which acts as the Proton acceptor. 1-deoxy-D-xylulose 5-phosphate-binding residues include Arg47 and His52. The active-site Proton acceptor is Glu72. 1-deoxy-D-xylulose 5-phosphate is bound at residue Thr102. His193 (proton donor) is an active-site residue. 3-amino-2-oxopropyl phosphate contacts are provided by residues Gly194 and 215–216; that span reads GH.

The protein belongs to the PNP synthase family. In terms of assembly, homooctamer; tetramer of dimers.

It localises to the cytoplasm. The enzyme catalyses 3-amino-2-oxopropyl phosphate + 1-deoxy-D-xylulose 5-phosphate = pyridoxine 5'-phosphate + phosphate + 2 H2O + H(+). It functions in the pathway cofactor biosynthesis; pyridoxine 5'-phosphate biosynthesis; pyridoxine 5'-phosphate from D-erythrose 4-phosphate: step 5/5. Functionally, catalyzes the complicated ring closure reaction between the two acyclic compounds 1-deoxy-D-xylulose-5-phosphate (DXP) and 3-amino-2-oxopropyl phosphate (1-amino-acetone-3-phosphate or AAP) to form pyridoxine 5'-phosphate (PNP) and inorganic phosphate. In Aliivibrio fischeri (strain ATCC 700601 / ES114) (Vibrio fischeri), this protein is Pyridoxine 5'-phosphate synthase.